A 221-amino-acid polypeptide reads, in one-letter code: Ras-related protein Rab-28 (221 aa).

S2 is modified (N-acetylserine). Residue S8 is modified to Phosphoserine. The GTP site is built by G21, G24, K25, T26, S27, G38, K39, Y41, and T44. Residue T26 coordinates Mg(2+). The switch I stretch occupies residues 35-49 (ETFGKQYKQTIGLDF). Mg(2+) contacts are provided by T44 and D68. Residues 68–85 (DIGGQTIGGKMLDKYIYG) are switch II. Residues G71, N129, K130, D132, A160, and K161 each coordinate GTP. C218 carries the cysteine methyl ester modification. C218 carries the S-farnesyl cysteine lipid modification. Positions 219–221 (AVQ) are cleaved as a propeptide — removed in mature form.

It belongs to the small GTPase superfamily. Rab family. In terms of assembly, interacts (prenylated form) with PDE6D; the interaction promotes RAB28 delivery to the photoreceptor outer segments. Interacts with KCNJ13; the interaction may facilitate cone outer segments phagocytosis. Interacts with RELA; the interaction contributes to RELA transport from cytoplasm to nucleus. The cofactor is Mg(2+). In terms of processing, isoprenylated. In terms of tissue distribution, testis, brain, and to much lower levels heart, skeletal muscle and fat cells. Expressed in the retina.

The protein resides in the cell membrane. It is found in the cytoplasm. It localises to the cytoskeleton. The protein localises to the cilium basal body. Its subcellular location is the nucleus. The enzyme catalyses GTP + H2O = GDP + phosphate + H(+). Regulated by guanine nucleotide exchange factors (GEFs) which promote the exchange of bound GDP for free GTP. Regulated by GTPase activating proteins (GAPs) which increase the GTP hydrolysis activity. Inhibited by GDP dissociation inhibitors (GDIs). Its function is as follows. The small GTPases Rab are key regulators of intracellular membrane trafficking, from the formation of transport vesicles to their fusion with membranes. Rabs cycle between an inactive GDP-bound form and an active GTP-bound form that is able to recruit to membranes different sets of downstream effectors directly responsible for vesicle formation, movement, tethering and fusion. RAB28 is required for shedding and phagocytosis of cone cell outer segments (OS) discs in the retina. Also participates in nuclear factor kappa-B p65/RELA nuclear transport in endothelial cells. This is Ras-related protein Rab-28 from Rattus norvegicus (Rat).